A 322-amino-acid chain; its full sequence is tRNA U34 carboxymethyltransferase (322 aa).

Residues Lys91, Trp105, Lys110, Gly129, 179–180, Met195, Tyr199, and Arg314 each bind carboxy-S-adenosyl-L-methionine; that span reads LE.

This sequence belongs to the class I-like SAM-binding methyltransferase superfamily. CmoB family. Homotetramer.

The enzyme catalyses carboxy-S-adenosyl-L-methionine + 5-hydroxyuridine(34) in tRNA = 5-carboxymethoxyuridine(34) in tRNA + S-adenosyl-L-homocysteine + H(+). In terms of biological role, catalyzes carboxymethyl transfer from carboxy-S-adenosyl-L-methionine (Cx-SAM) to 5-hydroxyuridine (ho5U) to form 5-carboxymethoxyuridine (cmo5U) at position 34 in tRNAs. In Pseudomonas aeruginosa (strain ATCC 15692 / DSM 22644 / CIP 104116 / JCM 14847 / LMG 12228 / 1C / PRS 101 / PAO1), this protein is tRNA U34 carboxymethyltransferase.